The chain runs to 100 residues: Cystatin-B (100 aa).

One can recognise a Cystatin domain in the interval 6 to 88 (GGISAPLDAD…GGGLELSGMQ (83 aa)). The short motif at 48 to 52 (QIVSG) is the Secondary area of contact element.

It belongs to the cystatin family. As to expression, widely expressed. Highly expressed in liver and to a lesser extent in spleen, gill, brain, intestine, kidney, head kidney and blood. Lowest level in muscle.

It localises to the cytoplasm. Functionally, thiol protease inhibitor. Has papain inhibitory activity in vitro. May be involved in immune responses against invading Gram-negative bacteria. The polypeptide is Cystatin-B (Oplegnathus fasciatus (Barred knifejaw)).